The sequence spans 121 residues: Large ribosomal subunit protein uL14c (121 aa).

It belongs to the universal ribosomal protein uL14 family. As to quaternary structure, part of the 50S ribosomal subunit.

It localises to the plastid. The protein localises to the chloroplast. In terms of biological role, binds to 23S rRNA. The chain is Large ribosomal subunit protein uL14c from Euglena gracilis.